The following is a 352-amino-acid chain: Chorismate synthase (352 aa).

Arg-48 serves as a coordination point for NADP(+). FMN contacts are provided by residues 125–127, 237–238, Gly-278, 293–297, and Arg-319; these read RSS, NA, and KPTSS.

This sequence belongs to the chorismate synthase family. As to quaternary structure, homotetramer. The cofactor is FMNH2.

It carries out the reaction 5-O-(1-carboxyvinyl)-3-phosphoshikimate = chorismate + phosphate. The protein operates within metabolic intermediate biosynthesis; chorismate biosynthesis; chorismate from D-erythrose 4-phosphate and phosphoenolpyruvate: step 7/7. Its function is as follows. Catalyzes the anti-1,4-elimination of the C-3 phosphate and the C-6 proR hydrogen from 5-enolpyruvylshikimate-3-phosphate (EPSP) to yield chorismate, which is the branch point compound that serves as the starting substrate for the three terminal pathways of aromatic amino acid biosynthesis. This reaction introduces a second double bond into the aromatic ring system. This chain is Chorismate synthase, found in Francisella tularensis subsp. holarctica (strain FTNF002-00 / FTA).